A 197-amino-acid chain; its full sequence is Histone chaperone asf1b-A (197 aa).

The protein belongs to the ASF1 family. In terms of assembly, interacts with histone H3 and histone H4.

It localises to the nucleus. In terms of biological role, histone chaperone that facilitates histone deposition and histone exchange and removal during nucleosome assembly and disassembly. This Danio rerio (Zebrafish) protein is Histone chaperone asf1b-A (asf1ba).